Reading from the N-terminus, the 245-residue chain is 5'-nucleotidase SurE (245 aa).

A divalent metal cation is bound by residues D8, D9, S39, and N91.

The protein belongs to the SurE nucleotidase family. The cofactor is a divalent metal cation.

The protein resides in the cytoplasm. It catalyses the reaction a ribonucleoside 5'-phosphate + H2O = a ribonucleoside + phosphate. In terms of biological role, nucleotidase that shows phosphatase activity on nucleoside 5'-monophosphates. The protein is 5'-nucleotidase SurE of Psychromonas ingrahamii (strain DSM 17664 / CCUG 51855 / 37).